The following is a 138-amino-acid chain: Small ribosomal subunit protein uS11c (138 aa).

The disordered stretch occupies residues 1–23 (MAKPILRIGSRKNTRSSSRKNVR). Residues 9 to 23 (GSRKNTRSSSRKNVR) are compositionally biased toward basic residues.

It belongs to the universal ribosomal protein uS11 family. In terms of assembly, part of the 30S ribosomal subunit.

The protein localises to the plastid. It localises to the chloroplast. This Nasturtium officinale (Watercress) protein is Small ribosomal subunit protein uS11c.